The chain runs to 352 residues: Potassium/proton antiporter CemA (352 aa).

The next 3 membrane-spanning stretches (helical) occupy residues 52-72 (VLVS…IHFF), 227-247 (IAAL…IILF), and 312-332 (IILL…KYWI).

This sequence belongs to the CemA family.

It is found in the plastid. The protein localises to the chloroplast inner membrane. The catalysed reaction is K(+)(in) + H(+)(out) = K(+)(out) + H(+)(in). Contributes to K(+)/H(+) antiport activity by supporting proton efflux to control proton extrusion and homeostasis in chloroplasts in a light-dependent manner to modulate photosynthesis. Prevents excessive induction of non-photochemical quenching (NPQ) under continuous-light conditions. Indirectly promotes efficient inorganic carbon uptake into chloroplasts. This is Potassium/proton antiporter CemA from Oltmannsiellopsis viridis (Marine flagellate).